Reading from the N-terminus, the 285-residue chain is Urease accessory protein UreD (285 aa).

Belongs to the UreD family. As to quaternary structure, ureD, UreF and UreG form a complex that acts as a GTP-hydrolysis-dependent molecular chaperone, activating the urease apoprotein by helping to assemble the nickel containing metallocenter of UreC. The UreE protein probably delivers the nickel.

It localises to the cytoplasm. Its function is as follows. Required for maturation of urease via the functional incorporation of the urease nickel metallocenter. In Picosynechococcus sp. (strain ATCC 27264 / PCC 7002 / PR-6) (Agmenellum quadruplicatum), this protein is Urease accessory protein UreD.